A 476-amino-acid chain; its full sequence is Sulfate adenylyltransferase subunit 1 (476 aa).

Residues K24 to E239 enclose the tr-type G domain. Residues G33–S40 are G1. G33 to S40 contacts GTP. Residues G91–D95 form a G2 region. Residues D112–G115 are G3. Residues D112–H116 and N167–D170 each bind GTP. The G4 stretch occupies residues N167–D170. Residues S205–L207 form a G5 region.

Belongs to the TRAFAC class translation factor GTPase superfamily. Classic translation factor GTPase family. CysN/NodQ subfamily. Heterodimer composed of CysD, the smaller subunit, and CysN.

The catalysed reaction is sulfate + ATP + H(+) = adenosine 5'-phosphosulfate + diphosphate. It participates in sulfur metabolism; hydrogen sulfide biosynthesis; sulfite from sulfate: step 1/3. Its function is as follows. With CysD forms the ATP sulfurylase (ATPS) that catalyzes the adenylation of sulfate producing adenosine 5'-phosphosulfate (APS) and diphosphate, the first enzymatic step in sulfur assimilation pathway. APS synthesis involves the formation of a high-energy phosphoric-sulfuric acid anhydride bond driven by GTP hydrolysis by CysN coupled to ATP hydrolysis by CysD. This Vibrio parahaemolyticus serotype O3:K6 (strain RIMD 2210633) protein is Sulfate adenylyltransferase subunit 1.